Consider the following 258-residue polypeptide: Acetylglutamate kinase (258 aa).

Substrate-binding positions include 44–45, Arg66, and Asn158; that span reads GG. ATP-binding positions include 181-186 and 209-211; these read DVSGIL and IIT.

The protein belongs to the acetylglutamate kinase family. ArgB subfamily. Homodimer.

The protein resides in the cytoplasm. The catalysed reaction is N-acetyl-L-glutamate + ATP = N-acetyl-L-glutamyl 5-phosphate + ADP. Its pathway is amino-acid biosynthesis; L-arginine biosynthesis; N(2)-acetyl-L-ornithine from L-glutamate: step 2/4. Catalyzes the ATP-dependent phosphorylation of N-acetyl-L-glutamate. In Escherichia coli O6:K15:H31 (strain 536 / UPEC), this protein is Acetylglutamate kinase.